Reading from the N-terminus, the 225-residue chain is Transmembrane protein 225 (225 aa).

The Cytoplasmic segment spans residues 1–8 (MVHVSNRS). The chain crosses the membrane as a helical span at residues 9 to 29 (IQGMNILFSSWAVVLMVMGIT). Over 30 to 72 (LDKWVELISEDERAKMNHSPWMMCCPALWPEDDLKVVRIMMTS) the chain is Extracellular. A helical transmembrane segment spans residues 73–93 (SLGLSFLLNLILGMKFTYLIP). Topologically, residues 94–99 (QNKYIQ) are cytoplasmic. Residues 100 to 120 (LFTTILSFFSGISLLWALILY) traverse the membrane as a helical segment. At 121 to 136 (HNKLKQGQSMHFSSYR) the chain is on the extracellular side. Residues 137-157 (ITWIMYTAYLNVFFLSVCGVL) form a helical membrane-spanning segment. Topologically, residues 158–225 (SLLECKLSTS…VQTRHVTWAL (68 aa)) are cytoplasmic. The RVxF signature appears at 219 to 223 (RHVTW).

In terms of assembly, interacts (via RVxF motif) with PPP1CC.

It is found in the cytoplasmic vesicle. The protein resides in the secretory vesicle. It localises to the acrosome membrane. Functionally, probably inhibits protein phosphatase 1 (PP1) in sperm via binding to catalytic subunit PPP1CC. This Homo sapiens (Human) protein is Transmembrane protein 225 (TMEM225).